The following is a 266-amino-acid chain: Killer cell lectin-like receptor 5 (266 aa).

At 1–44 (MSEPEVTYSTVRLHKSSGLQRLVSHEEIQGPGEAGYRKCSVPWQ) the chain is on the cytoplasmic side. Residues 45-66 (LTVRSLGIFCFLLLVTVAVLAV) form a helical; Signal-anchor for type II membrane protein membrane-spanning segment. The Extracellular segment spans residues 67 to 266 (KIFQYSQHKQ…CGKKLDHFPG (200 aa)). 2 N-linked (GlcNAc...) asparagine glycosylation sites follow: asparagine 87 and asparagine 104. A C-type lectin domain is found at 143–261 (GVKHWFCYGT…SYFCICGKKL (119 aa)). Disulfide bonds link cysteine 149/cysteine 154, cysteine 167/cysteine 255, cysteine 171/cysteine 257, and cysteine 236/cysteine 249. N-linked (GlcNAc...) asparagine glycosylation is present at asparagine 250.

As to quaternary structure, homodimer; disulfide-linked. Mostly expressed in NK cells, but also observed on NK T and memory T-cells.

It localises to the membrane. Functionally, receptor on natural killer (NK) cells for class I MHC. In Mus musculus (Mouse), this protein is Killer cell lectin-like receptor 5 (Klra5).